The chain runs to 485 residues: Bifunctional protein GlmU (485 aa).

The segment at 1 to 241 is pyrophosphorylase; it reads MSASDFSSAV…ARELAGVNDR (241 aa). UDP-N-acetyl-alpha-D-glucosamine is bound by residues 13-16, lysine 27, glutamine 84, and 89-90; these read LAAG and GT. Aspartate 114 lines the Mg(2+) pocket. 4 residues coordinate UDP-N-acetyl-alpha-D-glucosamine: glycine 151, glutamate 166, asparagine 181, and asparagine 239. Asparagine 239 provides a ligand contact to Mg(2+). Residues 242–262 are linker; sequence VQLAEAGAELNRRTVIAAMRG. The tract at residues 263–485 is N-acetyltransferase; that stretch reads GATIVDPATT…AAQNVHNQEG (223 aa). Residues arginine 344 and lysine 362 each contribute to the UDP-N-acetyl-alpha-D-glucosamine site. Histidine 374 (proton acceptor) is an active-site residue. 2 residues coordinate UDP-N-acetyl-alpha-D-glucosamine: tyrosine 377 and asparagine 388. Acetyl-CoA-binding positions include alanine 391, 397–398, serine 416, and alanine 434; that span reads NY. Residues 465–485 form a disordered region; it reads RPGTAAAQAAEAAQNVHNQEG. A compositionally biased stretch (low complexity) spans 469-478; sequence AAAQAAEAAQ.

The protein in the N-terminal section; belongs to the N-acetylglucosamine-1-phosphate uridyltransferase family. It in the C-terminal section; belongs to the transferase hexapeptide repeat family. As to quaternary structure, homotrimer. It depends on Mg(2+) as a cofactor.

It is found in the cytoplasm. It carries out the reaction alpha-D-glucosamine 1-phosphate + acetyl-CoA = N-acetyl-alpha-D-glucosamine 1-phosphate + CoA + H(+). The enzyme catalyses N-acetyl-alpha-D-glucosamine 1-phosphate + UTP + H(+) = UDP-N-acetyl-alpha-D-glucosamine + diphosphate. The protein operates within nucleotide-sugar biosynthesis; UDP-N-acetyl-alpha-D-glucosamine biosynthesis; N-acetyl-alpha-D-glucosamine 1-phosphate from alpha-D-glucosamine 6-phosphate (route II): step 2/2. Its pathway is nucleotide-sugar biosynthesis; UDP-N-acetyl-alpha-D-glucosamine biosynthesis; UDP-N-acetyl-alpha-D-glucosamine from N-acetyl-alpha-D-glucosamine 1-phosphate: step 1/1. It functions in the pathway bacterial outer membrane biogenesis; LPS lipid A biosynthesis. Catalyzes the last two sequential reactions in the de novo biosynthetic pathway for UDP-N-acetylglucosamine (UDP-GlcNAc). The C-terminal domain catalyzes the transfer of acetyl group from acetyl coenzyme A to glucosamine-1-phosphate (GlcN-1-P) to produce N-acetylglucosamine-1-phosphate (GlcNAc-1-P), which is converted into UDP-GlcNAc by the transfer of uridine 5-monophosphate (from uridine 5-triphosphate), a reaction catalyzed by the N-terminal domain. The protein is Bifunctional protein GlmU of Corynebacterium glutamicum (strain ATCC 13032 / DSM 20300 / JCM 1318 / BCRC 11384 / CCUG 27702 / LMG 3730 / NBRC 12168 / NCIMB 10025 / NRRL B-2784 / 534).